We begin with the raw amino-acid sequence, 929 residues long: Bifunctional glutamine synthetase adenylyltransferase/adenylyl-removing enzyme (929 aa).

An adenylyl removase region spans residues 1–423 (MSTPIDSSRA…RHFEQIFAAR (423 aa)). An adenylyl transferase region spans residues 433–929 (ARIRPEQSGD…FQLWEDIFGT (497 aa)).

The protein belongs to the GlnE family. Mg(2+) is required as a cofactor.

It catalyses the reaction [glutamine synthetase]-O(4)-(5'-adenylyl)-L-tyrosine + phosphate = [glutamine synthetase]-L-tyrosine + ADP. The catalysed reaction is [glutamine synthetase]-L-tyrosine + ATP = [glutamine synthetase]-O(4)-(5'-adenylyl)-L-tyrosine + diphosphate. In terms of biological role, involved in the regulation of glutamine synthetase GlnA, a key enzyme in the process to assimilate ammonia. When cellular nitrogen levels are high, the C-terminal adenylyl transferase (AT) inactivates GlnA by covalent transfer of an adenylyl group from ATP to specific tyrosine residue of GlnA, thus reducing its activity. Conversely, when nitrogen levels are low, the N-terminal adenylyl removase (AR) activates GlnA by removing the adenylyl group by phosphorolysis, increasing its activity. The regulatory region of GlnE binds the signal transduction protein PII (GlnB) which indicates the nitrogen status of the cell. The chain is Bifunctional glutamine synthetase adenylyltransferase/adenylyl-removing enzyme from Nitrosomonas europaea (strain ATCC 19718 / CIP 103999 / KCTC 2705 / NBRC 14298).